We begin with the raw amino-acid sequence, 406 residues long: Tryptophan synthase beta chain (406 aa).

Lys-99 carries the post-translational modification N6-(pyridoxal phosphate)lysine.

This sequence belongs to the TrpB family. In terms of assembly, tetramer of two alpha and two beta chains. Pyridoxal 5'-phosphate is required as a cofactor.

The catalysed reaction is (1S,2R)-1-C-(indol-3-yl)glycerol 3-phosphate + L-serine = D-glyceraldehyde 3-phosphate + L-tryptophan + H2O. It participates in amino-acid biosynthesis; L-tryptophan biosynthesis; L-tryptophan from chorismate: step 5/5. Functionally, the beta subunit is responsible for the synthesis of L-tryptophan from indole and L-serine. The chain is Tryptophan synthase beta chain from Chelativorans sp. (strain BNC1).